The following is a 183-amino-acid chain: Oligoribonuclease (183 aa).

Residues 9 to 172 enclose the Exonuclease domain; it reads LIWIDLEMTG…DDIRESIEEL (164 aa). Residue Tyr130 is part of the active site.

It belongs to the oligoribonuclease family.

The protein resides in the cytoplasm. In terms of biological role, 3'-to-5' exoribonuclease specific for small oligoribonucleotides. The polypeptide is Oligoribonuclease (Haemophilus ducreyi (strain 35000HP / ATCC 700724)).